A 376-amino-acid chain; its full sequence is GTPase Obg (376 aa).

An Obg domain is found at 2-161; sequence ASFVDEVLIR…RVVHVELRIV (160 aa). One can recognise an OBG-type G domain in the interval 162–328; it reads ADVGFVGLPN…LQEAFVRLSD (167 aa). GTP-binding positions include 168 to 175, 193 to 197, 215 to 218, 282 to 285, and 309 to 311; these read GLPNAGKS, FTTRI, DVPG, TKLD, and SVH. The Mg(2+) site is built by serine 175 and threonine 195.

This sequence belongs to the TRAFAC class OBG-HflX-like GTPase superfamily. OBG GTPase family. As to quaternary structure, monomer. Mg(2+) is required as a cofactor.

It is found in the cytoplasm. In terms of biological role, an essential GTPase which binds GTP, GDP and possibly (p)ppGpp with moderate affinity, with high nucleotide exchange rates and a fairly low GTP hydrolysis rate. Plays a role in control of the cell cycle, stress response, ribosome biogenesis and in those bacteria that undergo differentiation, in morphogenesis control. The polypeptide is GTPase Obg (Treponema pallidum (strain Nichols)).